A 441-amino-acid polypeptide reads, in one-letter code: Mitochondrial distribution and morphology protein 12 (441 aa).

One can recognise an SMP-LTD domain in the interval methionine 1–valine 441. 2 disordered regions span residues tyrosine 70–glutamate 89 and threonine 180–glutamate 289. Composition is skewed to polar residues over residues serine 226–threonine 245 and serine 253–glycine 263.

It belongs to the MDM12 family. In terms of assembly, component of the ER-mitochondria encounter structure (ERMES) or MDM complex, composed of MMM1, MDM10, MDM12 and MDM34. An MMM1 homodimer associates with one molecule of MDM12 on each side in a pairwise head-to-tail manner, and the SMP-LTD domains of MMM1 and MDM12 generate a continuous hydrophobic tunnel for phospholipid trafficking.

The protein localises to the mitochondrion outer membrane. It is found in the endoplasmic reticulum membrane. Component of the ERMES/MDM complex, which serves as a molecular tether to connect the endoplasmic reticulum (ER) and mitochondria. Components of this complex are involved in the control of mitochondrial shape and protein biogenesis, and function in nonvesicular lipid trafficking between the ER and mitochondria. MDM12 is required for the interaction of the ER-resident membrane protein MMM1 and the outer mitochondrial membrane-resident beta-barrel protein MDM10. The MDM12-MMM1 subcomplex functions in the major beta-barrel assembly pathway that is responsible for biogenesis of all mitochondrial outer membrane beta-barrel proteins, and acts in a late step after the SAM complex. The MDM10-MDM12-MMM1 subcomplex further acts in the TOM40-specific pathway after the action of the MDM12-MMM1 complex. Essential for establishing and maintaining the structure of mitochondria and maintenance of mtDNA nucleoids. The protein is Mitochondrial distribution and morphology protein 12 of Paracoccidioides brasiliensis (strain Pb03).